A 357-amino-acid chain; its full sequence is Thiamine thiazole synthase 3, chloroplastic (357 aa).

A chloroplast-targeting transit peptide spans 1–51 (MSISAAGVATGLGANVELKSNVGSSSSSVAGVRLFTSRKAQLRRCAAPATS). Substrate is bound by residues alanine 103, 123–124 (EQ), glycine 131, and alanine 196. Cysteine 225 is subject to 2,3-didehydroalanine (Cys). Substrate-binding positions include aspartate 227, histidine 242, methionine 294, and 304 to 306 (RMG).

This sequence belongs to the THI4 family. As to quaternary structure, homooctamer. Fe cation serves as cofactor. During the catalytic reaction, a sulfide is transferred from Cys-225 to a reaction intermediate, generating a dehydroalanine residue.

The protein resides in the plastid. It is found in the chloroplast. The enzyme catalyses [ADP-thiazole synthase]-L-cysteine + glycine + NAD(+) = [ADP-thiazole synthase]-dehydroalanine + ADP-5-ethyl-4-methylthiazole-2-carboxylate + nicotinamide + 3 H2O + 2 H(+). Involved in biosynthesis of the thiamine precursor thiazole. Catalyzes the conversion of NAD and glycine to adenosine diphosphate 5-(2-hydroxyethyl)-4-methylthiazole-2-carboxylic acid (ADT), an adenylated thiazole intermediate. The reaction includes an iron-dependent sulfide transfer from a conserved cysteine residue of the protein to a thiazole intermediate. The enzyme can only undergo a single turnover, which suggests it is a suicide enzyme. May have additional roles in adaptation to various stress conditions and in DNA damage tolerance. The polypeptide is Thiamine thiazole synthase 3, chloroplastic (Physcomitrium patens (Spreading-leaved earth moss)).